The sequence spans 131 residues: uncharacterized protein (131 aa).

This is an uncharacterized protein from Escherichia coli.